The following is a 291-amino-acid chain: Presqualene diphosphate synthase (291 aa).

The segment at 1-23 (MTSAMKKIQPEAFSEKSSDSQAS) is disordered.

It belongs to the phytoene/squalene synthase family. HpnD subfamily.

It carries out the reaction 2 (2E,6E)-farnesyl diphosphate = presqualene diphosphate + diphosphate. Its pathway is secondary metabolite biosynthesis; hopanoid biosynthesis. Functionally, involved in the biosynthesis of the hopanoid precursor squalene (SQ) from farnesyl diphosphate (FPP). Catalyzes the first step, the formation of presqualene diphosphate (PSPP) from two molecules of FPP. In Zymomonas mobilis subsp. mobilis (strain ATCC 31821 / ZM4 / CP4), this protein is Presqualene diphosphate synthase.